The sequence spans 78 residues: Gas vesicle protein G (78 aa).

This sequence belongs to the gas vesicle GvpG family.

The protein localises to the gas vesicle. Its function is as follows. Might be a minor component of the gas vesicle involved in nucleating their formation. Gas vesicles are hollow, gas filled proteinaceous nanostructures found in some microorganisms. It is not clear what function gas vesicles perform in soil bacteria. The protein is Gas vesicle protein G of Streptomyces sp. (strain CB03234).